The sequence spans 1236 residues: Structural polyprotein (1236 aa).

The segment at 1–36 is necessary for nucleocapsid assembly and virus assembly; that stretch reads MFPYPQLNFPPVYPTNPMAYRDPNPPRCRWRPFRPP. The segment at 37 to 70 is host transcription inhibition; it reads LAAQIEDLRRSIANLTFKQRSPNPPPGPPPKKKK. Positions 44-51 match the Supraphysiological nuclear export signal motif; sequence LRRSIANL. The tract at residues 44-103 is disordered; that stretch reads LRRSIANLTFKQRSPNPPPGPPPKKKKSAPKPKPTQPKKKKQQAKKTKRKPKPGKRQRMC. Residues 66 to 102 are compositionally biased toward basic residues; sequence PKKKKSAPKPKPTQPKKKKQQAKKTKRKPKPGKRQRM. A Nuclear localization signal motif is present at residues 67–70; the sequence is KKKK. Residues 83–111 are binding to the viral RNA; sequence KKQQAKKTKRKPKPGKRQRMCMKLESDKT. Residues 96–110 form a ribosome-binding region; the sequence is PGKRQRMCMKLESDK. Serine 108 carries the post-translational modification Phosphoserine. The region spanning 110 to 259 is the Peptidase S3 domain; it reads KTFPIMLNGQ…KDTPEGSEPW (150 aa). Threonine 111 carries the post-translational modification Phosphothreonine. Histidine 136 (charge relay system) is an active-site residue. The interval 152–157 is interaction with spike glycoprotein E2; the sequence is KKASMY. Residues aspartate 158 and serine 210 each act as charge relay system in the active site. An interaction with spike glycoprotein E2 region spans residues 244–248; the sequence is QKGVT. Residues 260 to 271 form a functions as an uncleaved signal peptide for the precursor of protein E3/E2 region; the sequence is SLVTALCVLSNV. At 260–687 the chain is on the extracellular side; it reads SLVTALCVLS…YYHRHPVYTV (428 aa). Intrachain disulfides connect cysteine 266–cysteine 275, cysteine 335–cysteine 443, cysteine 338–cysteine 344, cysteine 410–cysteine 424, cysteine 471–cysteine 585, cysteine 520–cysteine 545, and cysteine 522–cysteine 539. A glycan (N-linked (GlcNAc...) asparagine; by host) is linked at asparagine 270. An N-linked (GlcNAc...) asparagine; by host glycan is attached at asparagine 515. An N-linked (GlcNAc...) asparagine; by host glycan is attached at asparagine 637. The chain crosses the membrane as a helical span at residues 688–708; the sequence is IVLCGVALAILVGTASSAACI. Topologically, residues 709-742 are cytoplasmic; sequence AKARRDCLTPYALAPNATVPTALAVLCCIRPTNA. The interaction with the capsid protein stretch occupies residues 710–714; sequence KARRD. 3 S-palmitoyl cysteine; by host lipidation sites follow: cysteine 715, cysteine 735, and cysteine 736. Cysteines 715 and 736 form a disulfide. Positions 717–737 are transient transmembrane before p62-6K protein processing; the sequence is TPYALAPNATVPTALAVLCCI. Residues 743-767 lie on the Extracellular side of the membrane; that stretch reads ETFGETLNHLWFNNQPFLWAQLCIP. 2 helical membrane passes run 768–788 and 789–809; these read LAAL…LLVA and GVCL…NVPG. The Extracellular portion of the chain corresponds to 810-1205; that stretch reads IPYKALVERA…QAAVSKTSWN (396 aa). Cystine bridges form between cysteine 846-cysteine 911, cysteine 859-cysteine 891, cysteine 860-cysteine 893, and cysteine 865-cysteine 875. Residues 881–898 are E1 fusion peptide loop; sequence VYPFMWGGAQCFCDSENT. Residues asparagine 936, asparagine 1042, and asparagine 1067 are each glycosylated (N-linked (GlcNAc...) asparagine; by host). 4 cysteine pairs are disulfide-bonded: cysteine 1056–cysteine 1068, cysteine 1098–cysteine 1173, cysteine 1103–cysteine 1177, and cysteine 1125–cysteine 1167. A helical transmembrane segment spans residues 1206–1226; the sequence is WLLALFGGASSLIVVGLIVLV. At 1227-1236 the chain is on the cytoplasmic side; it reads CSSMLINTRR.

As to quaternary structure, homodimer. Homomultimer. Interacts with host karyopherin KPNA4; this interaction allows the nuclear import of the viral capsid protein. Interacts with spike glycoprotein E2. Interacts with host IRAK1; the interaction leads to inhibition of IRAK1-dependent signaling. Part of a tetrameric complex composed of host CRM1, host importin alpha/beta dimer and the viral capsid; this complex blocks the receptor-mediated transport through the nuclear pore. Interacts with host phosphatase PPP1CA; this interaction dephosphorylates the capsid protein, which increases its ability to bind to the viral genome. In terms of assembly, the precursor of protein E3/E2 and E1 form a heterodimer shortly after synthesis. Interacts with spike glycoprotein E2. The precursor of protein E3/E2 and E1 form a heterodimer shortly after synthesis. Processing of the precursor of protein E3/E2 into E2 and E3 results in a heterodimer of the spike glycoproteins E2 and E1. Spike at virion surface are constituted of three E2-E1 heterodimers. After target cell attachment and endocytosis, E1 change conformation to form homotrimers. Interacts with 6K protein. As to quaternary structure, interacts with spike glycoprotein E1. Processing of the precursor of protein E3/E2 into E2 and E3 results in a heterodimer of the spike glycoproteins E2 and E1. Spike at virion surface are constituted of a trimer of E2-E1 heterodimers. Interacts with 6K protein. The E2-E1 heterodimer interacts with host PCDH10 (via domain Cadherin 1); this interaction mediates viral entry to the host cell. In terms of assembly, oligomer. Interacts with spike glycoprotein E1. Interacts with spike glycoprotein E2. In terms of processing, structural polyprotein: Specific enzymatic cleavages in vivo yield mature proteins. Capsid protein is auto-cleaved during polyprotein translation, unmasking a signal peptide at the N-terminus of the precursor of E3/E2. The remaining polyprotein is then targeted to the host endoplasmic reticulum, where host signal peptidase cleaves it into pE2, 6K and E1 proteins. pE2 is further processed to mature E3 and E2 by host furin in trans-Golgi vesicle. Phosphorylated on serine and threonine residues. Post-translationally, palmitoylated via thioester bonds. These palmitoylations may induce disruption of the C-terminus transmembrane. This would result in the reorientation of E2 C-terminus from lumenal to cytoplasmic side. In terms of processing, N-glycosylated. Palmitoylated via thioester bonds.

The protein localises to the virion. It is found in the host cytoplasm. It localises to the host cell membrane. The protein resides in the host nucleus. Its subcellular location is the virion membrane. The protein localises to the host Golgi apparatus. It is found in the host trans-Golgi network. It localises to the host endoplasmic reticulum. The catalysed reaction is Autocatalytic release of the core protein from the N-terminus of the togavirus structural polyprotein by hydrolysis of a -Trp-|-Ser- bond.. Its function is as follows. Forms an icosahedral capsid with a T=4 symmetry composed of 240 copies of the capsid protein surrounded by a lipid membrane through which penetrate 80 spikes composed of trimers of E1-E2 heterodimers. The capsid protein binds to the viral RNA genome at a site adjacent to a ribosome binding site for viral genome translation following genome release. Possesses a protease activity that results in its autocatalytic cleavage from the nascent structural protein. Following its self-cleavage, the capsid protein transiently associates with ribosomes, and within several minutes the protein binds to viral RNA and rapidly assembles into icosahedric core particles. The resulting nucleocapsid eventually associates with the cytoplasmic domain of the spike glycoprotein E2 at the cell membrane, leading to budding and formation of mature virions. In case of infection, new virions attach to target cells and after clathrin-mediated endocytosis their membrane fuses with the host endosomal membrane. This leads to the release of the nucleocapsid into the cytoplasm, followed by an uncoating event necessary for the genomic RNA to become accessible. The uncoating might be triggered by the interaction of capsid proteins with ribosomes. Binding of ribosomes would release the genomic RNA since the same region is genomic RNA-binding and ribosome-binding. Specifically inhibits interleukin-1 receptor-associated kinase 1/IRAK1-dependent signaling during viral entry, representing a means by which the alphaviruses may evade innate immune detection and activation prior to viral gene expression. Inhibits host transcription. Forms a tetrameric complex with XPO1/CRM1 and the nuclear import receptor importin. This complex blocks the central channel of host nuclear pores thereby inhibiting the receptor-mediated nuclear transport and thus the host mRNA and rRNA transcription. The inhibition of transcription is linked to a cytopathic effect on the host cell. Provides the signal sequence for the translocation of the precursor of protein E3/E2 to the host endoplasmic reticulum. Furin-cleaved E3 remains associated with spike glycoprotein E1 and mediates pH protection of the latter during the transport via the secretory pathway. After virion release from the host cell, the assembly protein E3 is gradually released in the extracellular space. Functionally, plays an essential role in viral attachment to target host cell, by binding to the cell receptor PCDH10. Some specific strains may also bind host receptors VLDLR and LRP8/APOER2. Synthesized as a pE2 precursor which is processed by furin at the cell membrane just before virion budding, giving rise to E2-E1 heterodimer. The pE2-E1 heterodimer is stable, whereas E2-E1 is unstable and dissociate at low pH. pE2 is processed at the last step, presumably to avoid E1 fusion activation before its final export to cell surface. E2 C-terminus contains a transitory transmembrane that would be disrupted by palmitoylation, resulting in reorientation of the C-terminal tail from lumenal to cytoplasmic side. This step is critical since E2 C-terminus is involved in budding by interacting with capsid proteins. This release of E2 C-terminus in cytoplasm occurs lately in protein export, and precludes premature assembly of particles at the endoplasmic reticulum membrane. In terms of biological role, protein 6K: Acts as a viroporin that participates in virus glycoprotein processing and transport to the plasma membrane, cell permeabilization and budding of viral particles. Disrupts the calcium homeostasis of the cell, probably at the endoplasmic reticulum level resulting in the increased levels of cytoplasmic calcium. Because of its lipophilic properties, the 6K protein is postulated to influence the selection of lipids that interact with the transmembrane domains of the glycoproteins, which, in turn, affects the deformability of the bilayer required for the extreme curvature that occurs as budding proceeds. Present in low amount in virions, about 3% compared to viral glycoproteins. Its function is as follows. Class II viral fusion protein. Fusion activity is inactive as long as E1 is bound to E2 in mature virion. After virus attachment to target cell receptor PCDH10 and endocytosis, acidification of the endosome induce dissociation of E1/E2 heterodimer and concomitant trimerization of the E1 subunits. This E1 trimer is fusion active, and promotes release of viral nucleocapsid in cytoplasm after endosome and viral membrane fusion. Efficient fusion requires the presence of cholesterol and sphingolipid in the target membrane. The protein is Structural polyprotein of Western equine encephalitis virus (WEEV).